Here is a 99-residue protein sequence, read N- to C-terminus: Large ribosomal subunit protein uL23 (99 aa).

The protein belongs to the universal ribosomal protein uL23 family. In terms of assembly, part of the 50S ribosomal subunit. Contacts protein L29, and trigger factor when it is bound to the ribosome.

Functionally, one of the early assembly proteins it binds 23S rRNA. One of the proteins that surrounds the polypeptide exit tunnel on the outside of the ribosome. Forms the main docking site for trigger factor binding to the ribosome. This Stenotrophomonas maltophilia (strain R551-3) protein is Large ribosomal subunit protein uL23.